The sequence spans 116 residues: NADH-ubiquinone oxidoreductase chain 3 (116 aa).

3 consecutive transmembrane segments (helical) span residues 3–23 (LFATILIIMTTLSLVLALVSF), 56–76 (FFLVAVLFPLFDLEIALLLPL), and 88–108 (TLFWAMTVLILLTLGLAYEWA).

Belongs to the complex I subunit 3 family. Core subunit of respiratory chain NADH dehydrogenase (Complex I) which is composed of 45 different subunits.

The protein localises to the mitochondrion inner membrane. It catalyses the reaction a ubiquinone + NADH + 5 H(+)(in) = a ubiquinol + NAD(+) + 4 H(+)(out). Functionally, core subunit of the mitochondrial membrane respiratory chain NADH dehydrogenase (Complex I) which catalyzes electron transfer from NADH through the respiratory chain, using ubiquinone as an electron acceptor. Essential for the catalytic activity of complex I. The polypeptide is NADH-ubiquinone oxidoreductase chain 3 (mt-nd3) (Danio rerio (Zebrafish)).